The following is a 185-amino-acid chain: Ribosome-recycling factor (185 aa).

This sequence belongs to the RRF family.

The protein localises to the cytoplasm. Functionally, responsible for the release of ribosomes from messenger RNA at the termination of protein biosynthesis. May increase the efficiency of translation by recycling ribosomes from one round of translation to another. The chain is Ribosome-recycling factor from Kineococcus radiotolerans (strain ATCC BAA-149 / DSM 14245 / SRS30216).